A 178-amino-acid polypeptide reads, in one-letter code: MQAVEMEKKAGNENPMREVVLDKVVINIGVGESGERHKKAYSLLEELVEQKPAITYAKMTIKNFGIRKGEAIGIKVTLRGEKALKFLKDALTVKENRLSRKSIGEGYFAFGIAEHIDLPGVDYDPDVGIFGMDVCVSLKRRGYRVARRRRKKAKIATSHRVTKEDTIRWLESLGVIVE.

The protein belongs to the universal ribosomal protein uL5 family. Part of the 50S ribosomal subunit; contacts the 5S rRNA and probably tRNA. Forms a bridge to the 30S subunit in the 70S ribosome.

Its function is as follows. This is one of the proteins that bind and probably mediate the attachment of the 5S RNA into the large ribosomal subunit, where it forms part of the central protuberance. In the 70S ribosome it contacts protein S13 of the 30S subunit (bridge B1b), connecting the 2 subunits; this bridge is implicated in subunit movement. May contact the P site tRNA; the 5S rRNA and some of its associated proteins might help stabilize positioning of ribosome-bound tRNAs. The chain is Large ribosomal subunit protein uL5 from Archaeoglobus fulgidus (strain ATCC 49558 / DSM 4304 / JCM 9628 / NBRC 100126 / VC-16).